Reading from the N-terminus, the 95-residue chain is Large ribosomal subunit protein bL28 (95 aa).

Belongs to the bacterial ribosomal protein bL28 family.

The chain is Large ribosomal subunit protein bL28 from Orientia tsutsugamushi (strain Ikeda) (Rickettsia tsutsugamushi).